The primary structure comprises 430 residues: Adenylosuccinate synthetase (430 aa).

GTP-binding positions include 13–19 (GDEGKGK) and 41–43 (GHT). D14 acts as the Proton acceptor in catalysis. Mg(2+) is bound by residues D14 and G41. Residues 14–17 (DEGK), 39–42 (NAGH), T130, R144, Q225, T240, and R304 each bind IMP. H42 functions as the Proton donor in the catalytic mechanism. 300 to 306 (STTGRAR) provides a ligand contact to substrate. GTP contacts are provided by residues R306, 332 to 334 (KLD), and 414 to 416 (STG).

It belongs to the adenylosuccinate synthetase family. As to quaternary structure, homodimer. Mg(2+) is required as a cofactor.

The protein resides in the cytoplasm. The catalysed reaction is IMP + L-aspartate + GTP = N(6)-(1,2-dicarboxyethyl)-AMP + GDP + phosphate + 2 H(+). It functions in the pathway purine metabolism; AMP biosynthesis via de novo pathway; AMP from IMP: step 1/2. Its function is as follows. Plays an important role in the de novo pathway of purine nucleotide biosynthesis. Catalyzes the first committed step in the biosynthesis of AMP from IMP. This is Adenylosuccinate synthetase from Azotobacter vinelandii (strain DJ / ATCC BAA-1303).